A 301-amino-acid polypeptide reads, in one-letter code: Large ribosomal subunit protein uL18y (301 aa).

Residues 247-267 (RAEPNHKKTEKSAPKEHKRYN) are disordered. A compositionally biased stretch (basic and acidic residues) spans 249 to 261 (EPNHKKTEKSAPK).

Belongs to the universal ribosomal protein uL18 family. In terms of assembly, component of the large ribosomal subunit (LSU).

Its subcellular location is the cytoplasm. It localises to the nucleus. The protein resides in the nucleolus. The protein localises to the nucleoplasm. In terms of biological role, component of the ribosome, a large ribonucleoprotein complex responsible for the synthesis of proteins in the cell. The small ribosomal subunit (SSU) binds messenger RNAs (mRNAs) and translates the encoded message by selecting cognate aminoacyl-transfer RNA (tRNA) molecules. The large subunit (LSU) contains the ribosomal catalytic site termed the peptidyl transferase center (PTC), which catalyzes the formation of peptide bonds, thereby polymerizing the amino acids delivered by tRNAs into a polypeptide chain. The nascent polypeptides leave the ribosome through a tunnel in the LSU and interact with protein factors that function in enzymatic processing, targeting, and the membrane insertion of nascent chains at the exit of the ribosomal tunnel. Seems involved in the regulation of cell proliferation. Essential in leaf polarity establishment, probably having a role for translation in leaf dorsoventral patterning to specify leaf adaxial identity. In Arabidopsis thaliana (Mouse-ear cress), this protein is Large ribosomal subunit protein uL18y.